The following is a 670-amino-acid chain: Solute carrier organic anion transporter family member 1A1 (670 aa).

Topologically, residues 1 to 20 are cytoplasmic; that stretch reads MEETEKKVATQEGRFFSKMK. The chain crosses the membrane as a helical span at residues 21–40; sequence VFLMSLTCAYLAKSLSGVYM. Topologically, residues 41-59 are extracellular; sequence NSMLTQIERQFGIPTSVVG. A helical transmembrane segment spans residues 60 to 80; that stretch reads FITGSFEIGNLLLIVFVSYFG. At 81–86 the chain is on the cytoplasmic side; the sequence is RKLHRP. A helical membrane pass occupies residues 87–111; that stretch reads IIIGVGCVVMGLGCFLMASPHFLMG. The Extracellular segment spans residues 112–155; sequence RYKYETTISPTSNLSSNSFLCIENRTQTLKPTQDPTECVKEIKS. Residues Asn-124 and Asn-135 are each glycosylated (N-linked (GlcNAc...) asparagine). A helical transmembrane segment spans residues 156–184; that stretch reads LMWIYVLIGNTMRGIGETPIMPLGISYIE. Residues 185–203 are Cytoplasmic-facing; the sequence is DFAKSENSPLYIGILEMGK. Residues 204-224 traverse the membrane as a helical segment; sequence IVGPIIGLLLGSFFARVYVDI. Residues 225–242 lie on the Extracellular side of the membrane; it reads GSVNTDDLTITPTDTRWV. The chain crosses the membrane as a helical span at residues 243 to 267; that stretch reads GAWWIGFLVCAGVNILTSIPFFFFP. Topologically, residues 268 to 311 are cytoplasmic; the sequence is KTLPKKELQDNVDVTKYEKVEKHRERAKKENLGITKDFLPFMKS. The helical transmembrane segment at 312-333 threads the bilayer; it reads LCCNPIYMLFSLTSVLQINGFA. Topologically, residues 334–353 are extracellular; it reads STFTFLPKYLEQQYGKSTSE. The helical transmembrane segment at 354–377 threads the bilayer; that stretch reads AVFLIGVYSLPPVCLGYLISGFIM. Topologically, residues 378 to 381 are cytoplasmic; that stretch reads KKFK. A helical transmembrane segment spans residues 382–405; the sequence is ITVKKAAYIAFGLSLSEYFIFLCN. The Extracellular segment spans residues 406–513; that stretch reads YLLTCDNFPV…PECDNKLQYF (108 aa). The Kazal-like domain occupies 433–488; that stretch reads KNVLADCNTRCSCLTDTWDPVCGDNGLAYMSACLAGCEKSVGTGTNMVFQNCSCIG. 3 disulfides stabilise this stretch: Cys-439-Cys-469, Cys-445-Cys-465, and Cys-454-Cys-486. N-linked (GlcNAc...) asparagine glycans are attached at residues Asn-483 and Asn-492. The helical transmembrane segment at 514–536 threads the bilayer; the sequence is LIKSVFSSFIFSLAAIPGYMVLL. At 537–545 the chain is on the cytoplasmic side; that stretch reads RCVKSEEKS. The helical transmembrane segment at 546 to 571 threads the bilayer; the sequence is IGVGLHAFFIRLLAGIPAPVYFGALI. Topologically, residues 572–605 are extracellular; sequence DRTCLHWGTLKCGQPGACRMYDINRFRHIYLGLP. A helical membrane pass occupies residues 606-623; sequence AAVRGSSFLPAVFILILM. Over 624 to 670 the chain is Cytoplasmic; that stretch reads RKFHFPGDIHSPDTELAEMKLTEKESECTDVCRSPKVENDGELKTKL. Ser-634 carries the post-translational modification Phosphoserine.

It belongs to the organo anion transporter (TC 2.A.60) family. In terms of assembly, binds to PDZK1. Interaction with PDZK1 is required for expression on hepatocyte surface. As to expression, highly expressed in liver, and at lower levels in kidney. Not detected in other tissues.

It localises to the basolateral cell membrane. The enzyme catalyses estrone 3-sulfate(out) + hydrogencarbonate(in) = estrone 3-sulfate(in) + hydrogencarbonate(out). It catalyses the reaction taurocholate(out) + hydrogencarbonate(in) = taurocholate(in) + hydrogencarbonate(out). It carries out the reaction L-thyroxine(out) = L-thyroxine(in). The catalysed reaction is prostaglandin E2(out) = prostaglandin E2(in). The enzyme catalyses 17beta-estradiol 17-O-(beta-D-glucuronate)(out) = 17beta-estradiol 17-O-(beta-D-glucuronate)(in). It catalyses the reaction dehydroepiandrosterone 3-sulfate(out) = dehydroepiandrosterone 3-sulfate(in). Its function is as follows. Mediates the Na(+)-independent transport of organic anions such as steroid sulfate conjugates (dehydroepiandrosterone sulfate (DHEAS), 17-beta-glucuronosyl estradiol, estrone-3-sulfate), conjugated (taurocholate) and unconjugated (cholate) bile acids, prostaglandin E2 (PGE2) and L-thyroxine T4. Also capable of transporting sulfobromophthalein (BSP), ouabain and gadoxetate. Hydrogencarbonate/HCO3(-) acts as the probable counteranion that exchanges for organic anions. Shows a pH-sensitive substrate specificity which may be ascribed to the protonation state of the binding site and leads to a stimulation of substrate transport in an acidic microenvironment. The polypeptide is Solute carrier organic anion transporter family member 1A1 (Mus musculus (Mouse)).